Consider the following 1026-residue polypeptide: Multidrug resistance protein MdtC (1026 aa).

11 helical membrane-spanning segments follow: residues 15–35 (ILIAAAITLCGILGFRLLPVA), 333–353 (EVEETLAISVALVILVVFLFL), 360–380 (LIPAVAVPVSLIGTFAAMYLC), 387–407 (LSLMALTIATGFVVDDAIVVL), 431–451 (VGFTVISMSLSLVAVFLPLLL), 463–483 (FAVTLSVAIGISLVVSLTLTP), 528–548 (LVGVVFLGTVALNIWLYIAIP), 853–873 (LILIVAAIATVYIVLGILYES), 897–917 (LFNAPFSLIALIGIMLLIGIV), 953–973 (PIMMTTLAALFGALPLVLSGG), and 984–1004 (ITIVGGLVMSQLLTLYTTPVV).

Belongs to the resistance-nodulation-cell division (RND) (TC 2.A.6) family. MdtC subfamily. Part of a tripartite efflux system composed of MdtA, MdtB and MdtC. MdtC forms a heteromultimer with MdtB.

It is found in the cell inner membrane. The sequence is that of Multidrug resistance protein MdtC from Salmonella agona (strain SL483).